A 167-amino-acid polypeptide reads, in one-letter code: ATP synthase subunit delta, mitochondrial (167 aa).

A mitochondrion-targeting transit peptide spans 1 to 28; that stretch reads MFRLSNYMLRKSQFPQGLVRAPFGIRGY.

Belongs to the ATPase epsilon chain family. As to quaternary structure, F-type ATPases have 2 components, CF(1) - the catalytic core - and CF(0) - the membrane proton channel. CF(1) has five subunits: alpha(3), beta(3), gamma(1), delta(1), epsilon(1). CF(0) has three main subunits: a, b and c.

It is found in the mitochondrion. It localises to the mitochondrion inner membrane. In terms of biological role, mitochondrial membrane ATP synthase (F(1)F(0) ATP synthase or Complex V) produces ATP from ADP in the presence of a proton gradient across the membrane which is generated by electron transport complexes of the respiratory chain. F-type ATPases consist of two structural domains, F(1) - containing the extramembraneous catalytic core, and F(0) - containing the membrane proton channel, linked together by a central stalk and a peripheral stalk. During catalysis, ATP turnover in the catalytic domain of F(1) is coupled via a rotary mechanism of the central stalk subunits to proton translocation. Part of the complex F(1) domain and of the central stalk which is part of the complex rotary element. Rotation of the central stalk against the surrounding alpha(3)beta(3) subunits leads to hydrolysis of ATP in three separate catalytic sites on the beta subunits. The sequence is that of ATP synthase subunit delta, mitochondrial (atp16) from Schizosaccharomyces pombe (strain 972 / ATCC 24843) (Fission yeast).